A 299-amino-acid chain; its full sequence is Fluorinase (299 aa).

Residues Asp-15, 20–22, Tyr-76, Ser-157, Asp-210, Asn-215, 269–270, and 277–279 contribute to the S-adenosyl-L-methionine site; these read DDS, SR, and RNA.

Belongs to the SAM hydrolase / SAM-dependent halogenase family.

The catalysed reaction is fluoride + S-adenosyl-L-methionine = 5'-deoxy-5'-fluoroadenosine + L-methionine. Activity is not severely affected by most metal ions (Mg(2+), Mn(2+), Co(2+) and Fe(2+)), but both Cu(2+) and Zn(2+) are strong inhibitors. Functionally, catalyzes the formation of a C-F bond by combining S-adenosyl-L-methionine (SAM) and fluoride to generate 5'-fluoro-5'-deoxyadenosine (5'-FDA) and L-methionine. In Actinopolyspora mzabensis, this protein is Fluorinase.